The primary structure comprises 502 residues: Maturase K (502 aa).

This sequence belongs to the intron maturase 2 family. MatK subfamily.

It is found in the plastid. It localises to the chloroplast. Usually encoded in the trnK tRNA gene intron. Probably assists in splicing its own and other chloroplast group II introns. The polypeptide is Maturase K (Vitis vinifera (Grape)).